We begin with the raw amino-acid sequence, 214 residues long: Probable chemoreceptor glutamine deamidase CheD (214 aa).

It belongs to the CheD family.

It catalyses the reaction L-glutaminyl-[protein] + H2O = L-glutamyl-[protein] + NH4(+). In terms of biological role, probably deamidates glutamine residues to glutamate on methyl-accepting chemotaxis receptors (MCPs), playing an important role in chemotaxis. The chain is Probable chemoreceptor glutamine deamidase CheD from Vibrio vulnificus (strain YJ016).